The primary structure comprises 600 residues: Aspartate--tRNA(Asp/Asn) ligase (600 aa).

E174 serves as a coordination point for L-aspartate. Residues 198–201 (QLFK) form an aspartate region. R220 is an L-aspartate binding site. ATP is bound by residues 220 to 222 (RDE) and Q229. An L-aspartate-binding site is contributed by H457. An ATP-binding site is contributed by E491. Residue R498 participates in L-aspartate binding. 543–546 (GLDR) lines the ATP pocket.

The protein belongs to the class-II aminoacyl-tRNA synthetase family. Type 1 subfamily. As to quaternary structure, homodimer.

It localises to the cytoplasm. The catalysed reaction is tRNA(Asx) + L-aspartate + ATP = L-aspartyl-tRNA(Asx) + AMP + diphosphate. Functionally, aspartyl-tRNA synthetase with relaxed tRNA specificity since it is able to aspartylate not only its cognate tRNA(Asp) but also tRNA(Asn). Reaction proceeds in two steps: L-aspartate is first activated by ATP to form Asp-AMP and then transferred to the acceptor end of tRNA(Asp/Asn). This is Aspartate--tRNA(Asp/Asn) ligase from Burkholderia orbicola (strain MC0-3).